A 314-amino-acid chain; its full sequence is Bifunctional riboflavin kinase/FMN adenylyltransferase (314 aa).

The protein belongs to the RibF family.

The enzyme catalyses riboflavin + ATP = FMN + ADP + H(+). The catalysed reaction is FMN + ATP + H(+) = FAD + diphosphate. It participates in cofactor biosynthesis; FAD biosynthesis; FAD from FMN: step 1/1. The protein operates within cofactor biosynthesis; FMN biosynthesis; FMN from riboflavin (ATP route): step 1/1. Its function is as follows. Catalyzes the phosphorylation of riboflavin to FMN followed by the adenylation of FMN to FAD. Can also catalyze the phosphorylation of the toxic riboflavin analogs 8-demethyl-8-aminoriboflavin (AF) to 8-demethyl-8-aminoriboflavin mononucleotide (AFMN) and roseoflavin (RoF) to roseoflavin mononucleotide (RoFMN), and the adenylation of AFMN to 8-demethyl-8-aminoriboflavin adenine dinucleotide (AFAD). This Listeria monocytogenes serovar 1/2a (strain ATCC BAA-679 / EGD-e) protein is Bifunctional riboflavin kinase/FMN adenylyltransferase.